We begin with the raw amino-acid sequence, 167 residues long: MARTSAIDYGRAAKYFLLLDFIKGFGLGMKYFFAPKHTVNYPHEKGPLSPRFRGEHALRRYPNGEERCIACKLCEAVCPAQAITIDAEPREDGSRRTTRYDIDMTKCIYCGFCQEACPVDAIVEGPNFEFSTETREELFYNKDRLLENGARWEAEIARNLELDAPYR.

2 4Fe-4S ferredoxin-type domains span residues 58 to 88 and 98 to 127; these read LRRYPNGEERCIACKLCEAVCPAQAITIDAE and TRYDIDMTKCIYCGFCQEACPVDAIVEGPN. The [4Fe-4S] cluster site is built by cysteine 68, cysteine 71, cysteine 74, cysteine 78, cysteine 107, cysteine 110, cysteine 113, and cysteine 117.

It belongs to the complex I 23 kDa subunit family. In terms of assembly, NDH-1 is composed of 14 different subunits. Subunits NuoA, H, J, K, L, M, N constitute the membrane sector of the complex. Requires [4Fe-4S] cluster as cofactor.

It localises to the cell inner membrane. It catalyses the reaction a quinone + NADH + 5 H(+)(in) = a quinol + NAD(+) + 4 H(+)(out). Its function is as follows. NDH-1 shuttles electrons from NADH, via FMN and iron-sulfur (Fe-S) centers, to quinones in the respiratory chain. The immediate electron acceptor for the enzyme in this species is believed to be ubiquinone. Couples the redox reaction to proton translocation (for every two electrons transferred, four hydrogen ions are translocated across the cytoplasmic membrane), and thus conserves the redox energy in a proton gradient. The sequence is that of NADH-quinone oxidoreductase subunit I 1 from Cereibacter sphaeroides (strain ATCC 17029 / ATH 2.4.9) (Rhodobacter sphaeroides).